The sequence spans 300 residues: GTPase Era (300 aa).

The 169-residue stretch at arginine 8–glutamate 176 folds into the Era-type G domain. The G1 stretch occupies residues glycine 16 to serine 23. Residue glycine 16–serine 23 participates in GTP binding. Positions glutamine 42–histidine 46 are G2. The G3 stretch occupies residues aspartate 63 to glycine 66. Residues aspartate 63–methionine 67 and asparagine 125–aspartate 128 each bind GTP. A G4 region spans residues asparagine 125–aspartate 128. Positions isoleucine 155–alanine 157 are G5. The KH type-2 domain maps to valine 199–glycine 283.

Belongs to the TRAFAC class TrmE-Era-EngA-EngB-Septin-like GTPase superfamily. Era GTPase family. Monomer.

Its subcellular location is the cytoplasm. It is found in the cell inner membrane. In terms of biological role, an essential GTPase that binds both GDP and GTP, with rapid nucleotide exchange. Plays a role in 16S rRNA processing and 30S ribosomal subunit biogenesis and possibly also in cell cycle regulation and energy metabolism. The chain is GTPase Era from Pseudomonas entomophila (strain L48).